Consider the following 163-residue polypeptide: Small ribosomal subunit protein uS5 (163 aa).

One can recognise an S5 DRBM domain in the interval 8–71; the sequence is LIEKIVYLNR…EKARKEMISV (64 aa).

The protein belongs to the universal ribosomal protein uS5 family. Part of the 30S ribosomal subunit. Contacts proteins S4 and S8.

With S4 and S12 plays an important role in translational accuracy. In terms of biological role, located at the back of the 30S subunit body where it stabilizes the conformation of the head with respect to the body. The sequence is that of Small ribosomal subunit protein uS5 from Maridesulfovibrio salexigens (strain ATCC 14822 / DSM 2638 / NCIMB 8403 / VKM B-1763) (Desulfovibrio salexigens).